The primary structure comprises 355 residues: Peptide chain release factor 1 (355 aa).

Position 232 is an N5-methylglutamine (Gln-232).

Belongs to the prokaryotic/mitochondrial release factor family. Methylated by PrmC. Methylation increases the termination efficiency of RF1.

The protein resides in the cytoplasm. Its function is as follows. Peptide chain release factor 1 directs the termination of translation in response to the peptide chain termination codons UAG and UAA. In Thermobifida fusca (strain YX), this protein is Peptide chain release factor 1.